Here is a 533-residue protein sequence, read N- to C-terminus: MRLDRRALYALVLLLACASLGLLYSSTRNAPSLPNPLALWSPPQGPPRLDLLDLAPEPRYAHIPVRIKEQVVGLLAQNNCSCESKGGSLPLPFLRQVRAVDLTKAFDAEELRAVSVAREQEYQAFLARSRSLADQLLIAPANSPLQYPLQGVEVQPLRSILVPGLSLQEASVQEIYQVNLSASLGTWDVAGEVTGVTLTGEGQPDLTLASPVLDKLNRQLQLVTYSSRSYQANTADTVRFSTKGHEVAFTILVRHPPNPRLYPPSSLPQGAEYNISALVTIATKTFLRYDRLRTLIASIRRFYPTVTIVIADDSDKPERISDPHVEHYFMPFGKGWFAGRNLAVSQVTTKYVLWVDDDFVFTARTRLEKLVDVLEKTPLDLVGGAVREISGYATTYRQLLSVEPGAPGLGNCFRQKQGFHHELVGFPSCVVTDGVVNFFLARTDKVRQVGFDPRLNRVAHLEFFLDGLGFLRVGSCSDVVVDHASKVKLPWTAKDPGAETYARYRYPGSLDQSQVAKHRLLFFKHRLQCMTAE.

Residues 1 to 7 lie on the Cytoplasmic side of the membrane; that stretch reads MRLDRRA. A helical; Signal-anchor for type II membrane protein membrane pass occupies residues 8-25; the sequence is LYALVLLLACASLGLLYS. At 26–533 the chain is on the lumenal side; sequence STRNAPSLPN…KHRLQCMTAE (508 aa). Asn79, Asn179, and Asn274 each carry an N-linked (GlcNAc...) asparagine glycan. The cysteines at positions 429 and 476 are disulfide-linked.

This sequence belongs to the glycosyltransferase 2 family. As to quaternary structure, homodimer; disulfide-linked. Most abundant in brain, liver, lung, spleen and testis.

Its subcellular location is the golgi apparatus membrane. The catalysed reaction is a ganglioside GM3 (d18:1(4E)) + UDP-N-acetyl-alpha-D-galactosamine = a ganglioside GM2 (d18:1(4E)) + UDP + H(+). The enzyme catalyses a ganglioside GD3 (d18:1(4E)) + UDP-N-acetyl-alpha-D-galactosamine = a ganglioside GD2 (d18:1(4E)) + UDP + H(+). It catalyses the reaction a ganglioside GM3 + UDP-N-acetyl-alpha-D-galactosamine = a ganglioside GM2 + UDP + H(+). It carries out the reaction a ganglioside GD3 + UDP-N-acetyl-alpha-D-galactosamine = a ganglioside GD2 + UDP + H(+). The catalysed reaction is a ganglioside GD1a + UDP-N-acetyl-alpha-D-galactosamine = a ganglioside GalNAc-GD1a + UDP + H(+). The enzyme catalyses a ganglioside GT3 (d18:1(4E)) + UDP-N-acetyl-alpha-D-galactosamine = a ganglioside GT2 (d18:1(4E)) + UDP + H(+). It catalyses the reaction a beta-D-Gal-(1-&gt;4)-beta-D-Glc-(1&lt;-&gt;1)-Cer(d18:1(4E)) + UDP-N-acetyl-alpha-D-galactosamine = a ganglioside GA2 (d18:1(4E)) + UDP + H(+). It carries out the reaction a neolactoside IV(3)-alpha-NeuGc-nLc4Cer + UDP-N-acetyl-alpha-D-galactosamine = a neolactoside IV(4)-beta-GalNAc-IV(3)-alpha-NeuGc-nLc4Cer + UDP + H(+). The protein operates within sphingolipid metabolism. Its function is as follows. Involved in the biosynthesis of gangliosides GM2, GD2 and GA2. In terms of biological role, involved in the biosynthesis of gangliosides GM2, GD2, GT2 and GA2 from GM3, GD3, GT3 and GA3, respectively. The polypeptide is Beta-1,4 N-acetylgalactosaminyltransferase 1 (Mus musculus (Mouse)).